Here is a 60-residue protein sequence, read N- to C-terminus: Large ribosomal subunit protein uL30 (60 aa).

Belongs to the universal ribosomal protein uL30 family. As to quaternary structure, part of the 50S ribosomal subunit.

In Carboxydothermus hydrogenoformans (strain ATCC BAA-161 / DSM 6008 / Z-2901), this protein is Large ribosomal subunit protein uL30.